A 552-amino-acid polypeptide reads, in one-letter code: Serine/threonine-protein kinase RIO2 (552 aa).

A Protein kinase domain is found at 97–272 (VGNQMGVGKE…DRDVKCIKDF (176 aa)). Lys-123 serves as a coordination point for ATP. The active-site Proton acceptor is Asp-228. Ser-332, Ser-335, Ser-337, Ser-350, Ser-362, Ser-380, Ser-382, Ser-385, and Ser-390 each carry phosphoserine. Positions 399-408 (ALEEIKGQVV) match the Nuclear export signal motif. Residues Ser-412, Ser-417, and Ser-442 each carry the phosphoserine modification. Phosphotyrosine is present on Tyr-445. Ser-548 is subject to Phosphoserine.

The protein belongs to the protein kinase superfamily. RIO-type Ser/Thr kinase family. In terms of assembly, associated with late 40S pre-ribosomal particles. Interacts with PLK1 (via its N-terminus). It depends on Mg(2+) as a cofactor. In terms of processing, autophosphorylated (in vitro). Phosphorylation at Ser-335, Ser-380, Ser-548 by PLK1 affects the timing of the metaphase-anaphase transition.

The protein localises to the cytoplasm. It catalyses the reaction L-seryl-[protein] + ATP = O-phospho-L-seryl-[protein] + ADP + H(+). The enzyme catalyses L-threonyl-[protein] + ATP = O-phospho-L-threonyl-[protein] + ADP + H(+). In terms of biological role, serine/threonine-protein kinase involved in the final steps of cytoplasmic maturation of the 40S ribosomal subunit. Involved in export of the 40S pre-ribosome particles (pre-40S) from the nucleus to the cytoplasm. Its kinase activity is required for the release of NOB1, PNO1 and LTV1 from the late pre-40S and the processing of 18S-E pre-rRNA to the mature 18S rRNA. Regulates the timing of the metaphase-anaphase transition during mitotic progression, and its phosphorylation, most likely by PLK1, regulates this function. In Homo sapiens (Human), this protein is Serine/threonine-protein kinase RIO2.